Consider the following 178-residue polypeptide: Protein FLOWERING LOCUS T 1 (178 aa).

The protein belongs to the phosphatidylethanolamine-binding protein family. In terms of tissue distribution, expressed in leaves but not in shoot apex.

Its function is as follows. Involved in the regulation of vernalization and of flowering time. In Brachypodium distachyon (Purple false brome), this protein is Protein FLOWERING LOCUS T 1.